The following is a 160-amino-acid chain: Transcriptional repressor NrdR (160 aa).

Residues 1–11 are compositionally biased toward polar residues; sequence MRCPNCNSLDT. The interval 1 to 20 is disordered; it reads MRCPNCNSLDTQVKDSRPTE. A zinc finger lies at 3–34; that stretch reads CPNCNSLDTQVKDSRPTEDSSVIRRRRVCIAC. The ATP-cone domain occupies 49 to 139; the sequence is LTVIKRNGRR…VYRNFREAKD (91 aa).

It belongs to the NrdR family. It depends on Zn(2+) as a cofactor.

Its function is as follows. Negatively regulates transcription of bacterial ribonucleotide reductase nrd genes and operons by binding to NrdR-boxes. The sequence is that of Transcriptional repressor NrdR from Rhodopseudomonas palustris (strain HaA2).